The primary structure comprises 112 residues: uncharacterized protein (112 aa).

2 helical membrane passes run 33 to 53 (IIGI…MIIF) and 69 to 89 (MNNI…HITV).

It localises to the membrane. This is an uncharacterized protein from Saccharomyces cerevisiae (strain ATCC 204508 / S288c) (Baker's yeast).